Consider the following 3149-residue polypeptide: Large tegument protein deneddylase (3149 aa).

A compositionally biased stretch (polar residues) spans 1–13; sequence MSNGDWGQSQRTR. The segment at 1-30 is disordered; the sequence is MSNGDWGQSQRTRGTGPVRGIRTMDVNAPG. Positions 1-268 are deubiquitination activity; sequence MSNGDWGQSQ…YEANGSGFDL (268 aa). The Peptidase C76 domain occupies 41 to 258; the sequence is LGTASCNQAH…MLEHYGVYDF (218 aa). Active-site residues include C61, D193, and H195. The disordered stretch occupies residues 319 to 341; it reads PAARYSPAKTNSPPSSPASAAPA. A run of 8 repeats spans residues 335 to 339, 340 to 344, 345 to 349, 350 to 354, 355 to 359, 360 to 364, 365 to 369, and 370 to 374. The 8 X 5 AA repeats of P-A-S-A-A stretch occupies residues 335-374; the sequence is PASAAPASAAPASAAPASAAPASAAPASAAPASAAPASAA. Disordered regions lie at residues 382–656, 901–923, 1143–1166, 1412–1434, 1644–1677, 2583–2839, 2852–2981, and 2995–3019; these read FIPI…GSGL, LLSGGDQEAGEGGGEPEDNSIYR, APISPASPSATPANHDNPEATPPL, GRKEKEKLREQEDKERQERRARE, PEATNDPGQANLPPPPTIPQATAPPRLASDSALW, GLVS…PTAV, AAAS…PGAR, and QTYTVRKEAPPSAASQLPKMPKCKD. Over residues 462–483 the composition is skewed to pro residues; it reads LPPPVIPIPHQSPPASPTPHPA. Composition is skewed to low complexity over residues 509–536 and 544–564; these read AAPSNPKIPLTTPSPSPTAAAAPTTTTL and QPPQSAAPAPSPLLPQQQPTP. The segment at 554 to 584 is interaction with inner tegument protein; sequence SPLLPQQQPTPSAAPAPSPLLPQQQPPPSAA. Positions 565–609 are enriched in pro residues; the sequence is SAAPAPSPLLPQQQPPPSAARAPSPLPPQQQPLPSATPAPPPAQQ. The segment covering 1143-1155 has biased composition (low complexity); it reads APISPASPSATPA. Residues 2592–2603 are compositionally biased toward polar residues; the sequence is SADNTPASSDRL. Residues 2711–2720 are compositionally biased toward pro residues; sequence QPAPQQPPSS. 2 stretches are compositionally biased toward polar residues: residues 2734 to 2745 and 2784 to 2804; these read SPHSTPSTASGS and SAASLTTFGLQPQDTQASSQD. Residues 2812 to 2827 are compositionally biased toward basic and acidic residues; that stretch reads MQREKKQQGGREEAAE. Residues 2874–2885 show a composition bias toward low complexity; it reads APALGSGLAAPA.

The protein belongs to the herpesviridae large tegument protein family. In terms of assembly, interacts with host CUL1 and CUL4A; these interactions inhibit the E3 ligase activity of cullins. Interacts with inner tegument protein. Interacts with capsid vertex specific component CVC2. Interacts with the major capsid protein/MCP. Interacts with host TRIM25 and YWHAZ.

Its subcellular location is the virion tegument. It localises to the host cytoplasm. It is found in the host nucleus. The catalysed reaction is Thiol-dependent hydrolysis of ester, thioester, amide, peptide and isopeptide bonds formed by the C-terminal Gly of ubiquitin (a 76-residue protein attached to proteins as an intracellular targeting signal).. In terms of biological role, large tegument protein that plays multiple roles in the viral cycle. During viral entry, remains associated with the capsid while most of the tegument is detached and participates in the capsid transport toward the host nucleus. Plays a role in the routing of the capsid at the nuclear pore complex and subsequent uncoating. Within the host nucleus, acts as a deneddylase and promotes the degradation of nuclear CRLs (cullin-RING ubiquitin ligases) and thereby stabilizes nuclear CRL substrates, while cytoplasmic CRLs remain unaffected. These modifications prevent host cell cycle S-phase progression and create a favorable environment allowing efficient viral genome replication. Participates later in the secondary envelopment of capsids. Indeed, plays a linker role for the association of the outer viral tegument to the capsids together with the inner tegument protein. Counteracts host TLR-mediated NF-kappa-B activation through both MYD88 and TICAM1-dependent pathways by interfering with 'Lys-63'- and 'Lys-48'-linked ubiquitination of signaling intermediates such as TRAF6 and IKBKG. Inhibits type I interferon production by forming a tri-molecular complex with host TRIM25 and 14-3-3 thereby promoting TRIM25 autoubiquitination and sequestration of the ligase into inactive protein aggregates. In turn, host RIGI is recruited to the complex but ubiquitination is severely impaired leading to inhibition of the pathway. Also catalyzes the removal of 'Lys-48'- and 'Lys-63'-linked ubiquitin chains on host TBK1 and STING1 suppressing cGAS-STING signaling in addition to the RIGI-MAVS pathway. Inhibits selective autophagy by deubiquitinating host SQSTM1. In turn, decreased SQSTM1 ubiquitination fails to recruit LC3 to SQSTM1-positive aggregates. In the host nucleus, deubiquitinates topoisomerase II subunits TOP2A and TOP2B thereby stabilizing SUMOylated TOP2 which halts the DNA damage response to TOP2-induced double strand DNA breaks and promotes cell survival. This Epstein-Barr virus (strain B95-8) (HHV-4) protein is Large tegument protein deneddylase.